We begin with the raw amino-acid sequence, 196 residues long: Elongation factor Ts (196 aa).

Residues T80–V83 form an involved in Mg(2+) ion dislocation from EF-Tu region.

The protein belongs to the EF-Ts family. Heterotetramer composed of two EF-Ts.EF-Tu dimer complexes.

The protein localises to the cytoplasm. Its function is as follows. Associates with the EF-Tu.GDP complex and induces the exchange of GDP to GTP. It remains bound to the aminoacyl-tRNA.EF-Tu.GTP complex up to the GTP hydrolysis stage on the ribosome. The polypeptide is Elongation factor Ts (tsf) (Thermus thermophilus (strain ATCC 27634 / DSM 579 / HB8)).